The sequence spans 256 residues: Pimeloyl-[acyl-carrier protein] methyl ester esterase (256 aa).

Positions 15-242 (HLVLLHGWGL…AAHAPFISHP (228 aa)) constitute an AB hydrolase-1 domain. Substrate contacts are provided by residues tryptophan 22, 82-83 (SL), and 143-147 (FLALQ). Serine 82 functions as the Nucleophile in the catalytic mechanism. Catalysis depends on residues aspartate 207 and histidine 235. Histidine 235 is a binding site for substrate.

It belongs to the AB hydrolase superfamily. Carboxylesterase BioH family. In terms of assembly, monomer.

The protein localises to the cytoplasm. It catalyses the reaction 6-carboxyhexanoyl-[ACP] methyl ester + H2O = 6-carboxyhexanoyl-[ACP] + methanol + H(+). The protein operates within cofactor biosynthesis; biotin biosynthesis. The physiological role of BioH is to remove the methyl group introduced by BioC when the pimeloyl moiety is complete. It allows to synthesize pimeloyl-ACP via the fatty acid synthetic pathway through the hydrolysis of the ester bonds of pimeloyl-ACP esters. This is Pimeloyl-[acyl-carrier protein] methyl ester esterase from Salmonella dublin (strain CT_02021853).